Consider the following 156-residue polypeptide: Lipoprotein signal peptidase (156 aa).

The next 2 helical transmembrane spans lie at 52 to 72 (ILEG…IGIV) and 85 to 105 (FATA…DRIF). Active-site residues include aspartate 111 and aspartate 129. A helical transmembrane segment spans residues 121–141 (NFPIFNVADSALCVGVGILFL).

This sequence belongs to the peptidase A8 family.

The protein localises to the cell membrane. The enzyme catalyses Release of signal peptides from bacterial membrane prolipoproteins. Hydrolyzes -Xaa-Yaa-Zaa-|-(S,diacylglyceryl)Cys-, in which Xaa is hydrophobic (preferably Leu), and Yaa (Ala or Ser) and Zaa (Gly or Ala) have small, neutral side chains.. Its pathway is protein modification; lipoprotein biosynthesis (signal peptide cleavage). Functionally, this protein specifically catalyzes the removal of signal peptides from prolipoproteins. This is Lipoprotein signal peptidase from Halalkalibacterium halodurans (strain ATCC BAA-125 / DSM 18197 / FERM 7344 / JCM 9153 / C-125) (Bacillus halodurans).